Consider the following 734-residue polypeptide: Photosystem I P700 chlorophyll a apoprotein A2 (734 aa).

The next 8 membrane-spanning stretches (helical) occupy residues 46–69 (IFAS…FHVA), 135–158 (LYTG…LHLQ), 175–199 (LNHH…HVAI), 273–291 (IAHH…GHMY), 330–353 (IHFQ…QHMY), 369–395 (AALY…IFFI), 417–439 (AIIS…LYVH), and 517–535 (FLVH…LILV). 2 residues coordinate [4Fe-4S] cluster: Cys559 and Cys568. 2 helical membrane passes run 575 to 596 (AFYL…YWHW) and 643 to 665 (LSVW…MFLI). Chlorophyll a contacts are provided by His654, Met662, and Tyr670. Trp671 contacts phylloquinone. The chain crosses the membrane as a helical span at residues 707–727 (LVGLAHFSVGYIFTYAAFLIA).

It belongs to the PsaA/PsaB family. In terms of assembly, the PsaA/B heterodimer binds the P700 chlorophyll special pair and subsequent electron acceptors. PSI consists of a core antenna complex that captures photons, and an electron transfer chain that converts photonic excitation into a charge separation. The eukaryotic PSI reaction center is composed of at least 11 subunits. P700 is a chlorophyll a/chlorophyll a' dimer, A0 is one or more chlorophyll a, A1 is one or both phylloquinones and FX is a shared 4Fe-4S iron-sulfur center. is required as a cofactor.

It is found in the plastid. Its subcellular location is the chloroplast thylakoid membrane. The catalysed reaction is reduced [plastocyanin] + hnu + oxidized [2Fe-2S]-[ferredoxin] = oxidized [plastocyanin] + reduced [2Fe-2S]-[ferredoxin]. In terms of biological role, psaA and PsaB bind P700, the primary electron donor of photosystem I (PSI), as well as the electron acceptors A0, A1 and FX. PSI is a plastocyanin-ferredoxin oxidoreductase, converting photonic excitation into a charge separation, which transfers an electron from the donor P700 chlorophyll pair to the spectroscopically characterized acceptors A0, A1, FX, FA and FB in turn. Oxidized P700 is reduced on the lumenal side of the thylakoid membrane by plastocyanin. This Calycanthus floridus var. glaucus (Eastern sweetshrub) protein is Photosystem I P700 chlorophyll a apoprotein A2.